The primary structure comprises 429 residues: Citrate synthase, chromosomal (429 aa).

Residues H306 and D364 contribute to the active site.

It belongs to the citrate synthase family.

It carries out the reaction oxaloacetate + acetyl-CoA + H2O = citrate + CoA + H(+). Its pathway is carbohydrate metabolism; tricarboxylic acid cycle; isocitrate from oxaloacetate: step 1/2. This is Citrate synthase, chromosomal (ccsA) from Rhizobium tropici.